The following is a 503-amino-acid chain: MEFSVKSGSPEKQRSACIVVGVFEPRRLSPIAEQLDKISDGYISALLRRGELEGKPGQTLLLHHVPNILSERILLIGCGKERELDERQYKQVIQKTINTLNDTGSMEAVCFLTELHVKGRNNYWKVRQAVETAKETLYSFDQLKTNKSEPRRPLRKMVFNVPTRRELTSGERAIQHGLAIAAGIKAAKDLGNMPPNICNAAYLASQARQLADTYSKNVITRVIGEQQMRELGMNSYLAVGNGSQNESLMSVIEYKGNPSEDARPIVLVGKGLTFDSGGISIKPAEGMDEMKYDMCGAAAVYGVMRMVAELQLPLNVIGVLAGCENMPGGRAYRPGDVLTTMSGQTVEVLNTDAEGRLVLCDVLTYVERFEPEAVIDVATLTGACVIALGHHITGLMSNHNPLAHELIGASELAGDRAWRLPLADEFQDQLESNFADMANIGGRPGGAITAGCFLSRFTRKYNWAHLDIAGTAWRSGKAKGATGRPVALLSQFLLNRAGFNGEE.

The Mn(2+) site is built by lysine 270 and aspartate 275. Lysine 282 is a catalytic residue. The Mn(2+) site is built by aspartate 293, aspartate 352, and glutamate 354. Arginine 356 is a catalytic residue.

The protein belongs to the peptidase M17 family. It depends on Mn(2+) as a cofactor.

The protein localises to the cytoplasm. It carries out the reaction Release of an N-terminal amino acid, Xaa-|-Yaa-, in which Xaa is preferably Leu, but may be other amino acids including Pro although not Arg or Lys, and Yaa may be Pro. Amino acid amides and methyl esters are also readily hydrolyzed, but rates on arylamides are exceedingly low.. The catalysed reaction is Release of an N-terminal amino acid, preferentially leucine, but not glutamic or aspartic acids.. Its function is as follows. Presumably involved in the processing and regular turnover of intracellular proteins. Catalyzes the removal of unsubstituted N-terminal amino acids from various peptides. This is Probable cytosol aminopeptidase from Klebsiella pneumoniae (strain 342).